We begin with the raw amino-acid sequence, 172 residues long: Adenine phosphoribosyltransferase (172 aa).

Belongs to the purine/pyrimidine phosphoribosyltransferase family. As to quaternary structure, homodimer.

It is found in the cytoplasm. It catalyses the reaction AMP + diphosphate = 5-phospho-alpha-D-ribose 1-diphosphate + adenine. It participates in purine metabolism; AMP biosynthesis via salvage pathway; AMP from adenine: step 1/1. Functionally, catalyzes a salvage reaction resulting in the formation of AMP, that is energically less costly than de novo synthesis. In Clostridium beijerinckii (strain ATCC 51743 / NCIMB 8052) (Clostridium acetobutylicum), this protein is Adenine phosphoribosyltransferase.